The primary structure comprises 440 residues: tRNA(Ile)-lysidine synthase (440 aa).

25–30 provides a ligand contact to ATP; sequence SGGVDS.

It belongs to the tRNA(Ile)-lysidine synthase family.

It localises to the cytoplasm. The catalysed reaction is cytidine(34) in tRNA(Ile2) + L-lysine + ATP = lysidine(34) in tRNA(Ile2) + AMP + diphosphate + H(+). Its function is as follows. Ligates lysine onto the cytidine present at position 34 of the AUA codon-specific tRNA(Ile) that contains the anticodon CAU, in an ATP-dependent manner. Cytidine is converted to lysidine, thus changing the amino acid specificity of the tRNA from methionine to isoleucine. The chain is tRNA(Ile)-lysidine synthase from Vibrio cholerae serotype O1 (strain ATCC 39541 / Classical Ogawa 395 / O395).